Consider the following 589-residue polypeptide: Protein MICRORCHIDIA 3 (589 aa).

The tract at residues 1–33 is disordered; that stretch reads MAPESKNAGVSVVVNLDSDSDSDNDDGVGGRGA. Positions 542 to 589 form a coiled coil; sequence MRCEEYVKKETELEQTVSNLAKELEETKSKCARLALLVDAKRREMQQV.

It belongs to the MORC ATPase protein family. In terms of assembly, homodimer and heterodimer. Component of an RNA-directed DNA methylation (RdDM) complex. The cofactor is Mg(2+). Requires Mn(2+) as cofactor.

It is found in the nucleus. Its function is as follows. Exhibits ATPase activity. Binds DNA/RNA in a non-specific manner and exhibits endonuclease activity. Probably involved in DNA repair. Involved in RNA-directed DNA methylation (RdDM) as a component of the RdDM machinery and required for gene silencing. May also be involved in the regulation of chromatin architecture to maintain gene silencing. This is Protein MICRORCHIDIA 3 from Arabidopsis thaliana (Mouse-ear cress).